A 176-amino-acid chain; its full sequence is Shikimate kinase (176 aa).

12-17 (GSGKST) contacts ATP. Position 16 (Ser16) interacts with Mg(2+). Residues Asp34, Arg58, and Gly80 each coordinate substrate. Arg117 contacts ATP. Arg136 serves as a coordination point for substrate. Arg153 is an ATP binding site.

The protein belongs to the shikimate kinase family. In terms of assembly, monomer. The cofactor is Mg(2+).

The protein resides in the cytoplasm. The catalysed reaction is shikimate + ATP = 3-phosphoshikimate + ADP + H(+). It functions in the pathway metabolic intermediate biosynthesis; chorismate biosynthesis; chorismate from D-erythrose 4-phosphate and phosphoenolpyruvate: step 5/7. Its function is as follows. Catalyzes the specific phosphorylation of the 3-hydroxyl group of shikimic acid using ATP as a cosubstrate. In Mycobacterium avium (strain 104), this protein is Shikimate kinase.